Here is a 154-residue protein sequence, read N- to C-terminus: Ubiquitin-conjugating enzyme E2 L3 (154 aa).

The region spanning 2–149 (AASRRLMKEL…AEEFTKKYGE (148 aa)) is the UBC core domain. Residue Cys86 is the Glycyl thioester intermediate of the active site. An N6-acetyllysine modification is found at Lys131.

This sequence belongs to the ubiquitin-conjugating enzyme family. As to quaternary structure, interacts with PRKN; involved in ubiquitination and degradation of misfolded proteins. Interacts with UBE3A. Interacts with CCNB1IP1, CBL, ZAP70, RNF19A, RNF19B and RNF144B. Interacts with ARIH1. Interacts with ARIH2 (via RING-type 1). Interacts with NCOA1; they functionally interact to regulate progesterone receptor transcriptional activity. Interacts with NDFIP1 (via N-terminus); the interaction mediates recruitment of UBE2L3 to ITCH and causes MAP3K7 ubiquitination. Post-translationally, ubiquitinated. The alteration of UBE2L3 protein levels during the S-phase of the cell cycle is due to ubiquitin-dependent proteasomal degradation. Autoubiquitinated in vitro.

The protein localises to the nucleus. It localises to the cytoplasm. It catalyses the reaction S-ubiquitinyl-[E1 ubiquitin-activating enzyme]-L-cysteine + [E2 ubiquitin-conjugating enzyme]-L-cysteine = [E1 ubiquitin-activating enzyme]-L-cysteine + S-ubiquitinyl-[E2 ubiquitin-conjugating enzyme]-L-cysteine.. It functions in the pathway protein modification; protein ubiquitination. Functionally, ubiquitin-conjugating enzyme E2 that specifically acts with HECT-type and RBR family E3 ubiquitin-protein ligases. Does not function with most RING-containing E3 ubiquitin-protein ligases because it lacks intrinsic E3-independent reactivity with lysine: in contrast, it has activity with the RBR family E3 enzymes, such as PRKN, RNF31 and ARIH1, that function like RING-HECT hybrids. Accepts ubiquitin from the E1 complex and catalyzes its covalent attachment to other proteins. Mediates ubiquitination by the CUL9-RBX1 complex. In vitro catalyzes 'Lys-11'-linked polyubiquitination. Involved in the selective degradation of short-lived and abnormal proteins. Down-regulated during the S-phase it is involved in progression through the cell cycle. Regulates nuclear hormone receptors transcriptional activity. May play a role in myelopoiesis. In Pongo abelii (Sumatran orangutan), this protein is Ubiquitin-conjugating enzyme E2 L3 (UBE2L3).